A 1537-amino-acid polypeptide reads, in one-letter code: Dicer-like protein 1 (1537 aa).

A disordered region spans residues 38–68 (SDPAESSVDVQDEHSSDDSDNENEVFPKQND). The region spanning 133–314 (LFERAKTQNT…EAATRLETFL (182 aa)) is the Helicase ATP-binding domain. 146-153 (LDTGSGKT) contacts ATP. The DEAH box signature appears at 259 to 262 (DEAH). Positions 459 to 618 (ELSKHFNDTT…EILPEDRILH (160 aa)) constitute a Helicase C-terminal domain. The Dicer dsRNA-binding fold domain occupies 651 to 741 (AIAILARYAS…NSIYHRRLPA (91 aa)). Residues 891–1019 (DTVSFVHNND…ICAEPLRISA (129 aa)) enclose the PAZ domain. 2 consecutive RNase III domains span residues 1043-1202 (IALE…LSGG) and 1253-1405 (ARHV…VDSK). Positions 1294, 1391, and 1394 each coordinate Mg(2+). The DRBM domain occupies 1439 to 1507 (TFLHNKLTNE…SEKALAVLDG (69 aa)). 4 residues coordinate Zn(2+): Cys1451, His1478, Cys1519, and Cys1521.

This sequence belongs to the helicase family. Dicer subfamily. Mg(2+) is required as a cofactor. The cofactor is Mn(2+).

In terms of biological role, dicer-like endonuclease involved in cleaving double-stranded RNA in the RNA interference (RNAi) pathway. Produces 21 to 25 bp dsRNAs (siRNAs) which target the selective destruction of homologous RNAs leading to sequence-specific suppression of gene expression, called post-transcriptional gene silencing (PTGS). Part of a broad host defense response against viral infection and transposons. The sequence is that of Dicer-like protein 1 (dcl1) from Aspergillus fumigatus (strain ATCC MYA-4609 / CBS 101355 / FGSC A1100 / Af293) (Neosartorya fumigata).